The chain runs to 706 residues: MARELRALLLWGRGLQSALRAPALAGVRRGKPVLHLQKTTVHFRDPTQSLASGISAGQLYSTQAAEDKKEEALHSIISNTEAVQGSVSKHEFQAETKKLLDIVARSLYSEKEVFIRELISNASDALEKLRHKRVCEGQVLPEMEIHLQTDAEKGTITIQDTGIGMTKEELVSNLGTIARSGSKAFLEALQHQAETSSRIIGQFGVGFYSAFMVADKVEVYSRPAAPESPGYQWLSDGSGVFEIAEASGVRPGTKIIIHLKSDCKDFANESRVQDVVTKYSNFVSFPLYLNGRRINTLQAIWMMDPKDISEFQHEEFYRYIAQAYDKPRFILHYKTDAPLNIRSIFYVPEMKPSMFDVSRELGSSVALYSRKVLIQTKATDILPKWLRFVRGVVDSEDIPLNLSRELLQESALIRKLRDVLQQRLIKFFIDQSKKDAEKYAKFFEDYGLFMREGIVTTAEQDIKEDIAKLLRYESSALPAGQLTSLSDYASRMQAGTRNIYYLCAPNRHLAEHSPYYEAMKQKQTEVLFCYEQFDELTLLHLREFDKKKLISVETDIVVDHYKEEKFEDTSPAGERLSEKETEELMAWMRNALGSRVTNVKVTFRLDTHPAMVTVLEMGAARHFLRMQQLAKTQEERAQLLQPTLEINPRHTLIKKLNQLREREPELAQLLVDQIYENAMIAAGLVDDPRAMVGRLNDLLVKALERH.

The transit peptide at 1-60 (MARELRALLLWGRGLQSALRAPALAGVRRGKPVLHLQKTTVHFRDPTQSLASGISAGQLY) directs the protein to the mitochondrion. Residues Asn-121 and Asp-160 each contribute to the ATP site. The residue at position 172 (Ser-172) is a Phosphoserine. Asn-173 is a binding site for ATP. Position 176 is a phosphothreonine (Thr-176). Ser-196 is subject to Phosphoserine. Phe-207 lines the ATP pocket. Residues Lys-264, Lys-326, and Lys-334 each carry the N6-acetyllysine modification. ATP is bound at residue Arg-404. N6-acetyllysine occurs at positions 426, 433, and 468. Phosphothreonine is present on Thr-496. The residue at position 570 (Ser-570) is a Phosphoserine.

This sequence belongs to the heat shock protein 90 family. As to quaternary structure, binds to the intracellular domain of tumor necrosis factor type 1 receptor. Binds to RB1. Interacts with SRC. Interacts with SDHA.

It localises to the mitochondrion. Its subcellular location is the mitochondrion inner membrane. The protein resides in the mitochondrion matrix. Its function is as follows. Chaperone that expresses an ATPase activity. Involved in maintaining mitochondrial function and polarization, downstream of PINK1 and mitochondrial complex I. Is a negative regulator of mitochondrial respiration able to modulate the balance between oxidative phosphorylation and aerobic glycolysis. The impact of TRAP1 on mitochondrial respiration is probably mediated by modulation of mitochondrial SRC and inhibition of SDHA. The chain is Heat shock protein 75 kDa, mitochondrial (Trap1) from Rattus norvegicus (Rat).